The primary structure comprises 861 residues: Leucine--tRNA ligase (861 aa).

The 'HIGH' region motif lies at 43–53 (PYPSGKLHMGH). The short motif at 588 to 592 (KMSKS) is the 'KMSKS' region element. Lys591 contributes to the ATP binding site.

This sequence belongs to the class-I aminoacyl-tRNA synthetase family.

The protein localises to the cytoplasm. It catalyses the reaction tRNA(Leu) + L-leucine + ATP = L-leucyl-tRNA(Leu) + AMP + diphosphate. This chain is Leucine--tRNA ligase, found in Symbiobacterium thermophilum (strain DSM 24528 / JCM 14929 / IAM 14863 / T).